The sequence spans 589 residues: Transcription factor 4 (589 aa).

6 disordered regions span residues 1–124 (MTSR…SSSK), 138–163 (DGHH…MLGN), 184–239 (PSHS…SQTG), 254–297 (HTNN…EGPL), 384–492 (SLLP…MANN), and 556–589 (KRRE…MGQM). Phosphoserine occurs at positions 8 and 13. Polar residues predominate over residues 56 to 74 (GTLSPTKPGSQYYPYSSNN). Residues 136 to 157 (MQDGHHSSDPWSSSSGMNQPGY) form a leucine-zipper region. Residues 184–224 (PSHSSADINSSLPPMSTFHRSGTNHYSTSSCTPPANGTDSI) are compositionally biased toward polar residues. Positions 255 to 266 (TNNSFSSNPSTP) are enriched in low complexity. The segment covering 283-292 (NGGQASSSPN) has biased composition (polar residues). S290 carries the post-translational modification Phosphoserine. Positions 380–403 (RGSHSLLPNQVPVPQLPVQSATSP) are class A specific domain. 2 stretches are compositionally biased toward low complexity: residues 385–398 (LLPN…LPVQ) and 421–430 (GQSVSSGSSE). Phosphoserine is present on S433. Composition is skewed to basic and acidic residues over residues 445-461 (KSSE…DIKS) and 477-492 (PEQK…MANN). The bHLH domain occupies 486-539 (ERRMANNARERLRVRDINEAFKELGRMVQLHLKSDKPQTKLLILHQAVAVILSL).

In terms of assembly, efficient DNA binding requires dimerization with another bHLH protein. Forms homo- or heterooligomers with myogenin. Interacts with HIVEP2. Interacts with NEUROD2. Interacts with AGBL1.

It is found in the nucleus. Transcription factor that binds to the immunoglobulin enhancer Mu-E5/KE5-motif. Involved in the initiation of neuronal differentiation. Activates transcription by binding to the E box (5'-CANNTG-3'). Binds to the E-box present in the somatostatin receptor 2 initiator element (SSTR2-INR) to activate transcription. Interacts with the CCAAT displacement protein (CDP2) to bind the tyrosine hydroxylase enhancer. The chain is Transcription factor 4 (Tcf4) from Rattus norvegicus (Rat).